The chain runs to 418 residues: Intracellular coagulation inhibitor 1 (418 aa).

The signal sequence occupies residues 1–24 (MKLGDWKFCLLLFQLMFLTNVCLS). N-linked (GlcNAc...) asparagine glycosylation is found at asparagine 49 and asparagine 404.

It belongs to the serpin family. As to quaternary structure, monomer. Forms a covalent heterodimer with clotting factor C. Interacts with big defensin. N-glycosylated. Expressed in hemocytes (at protein level).

The protein resides in the secreted. Functionally, serine protease inhibitor that specifically inhibits clotting factor C. Does not inhibit clotting factor B or proclotting enzyme. This is Intracellular coagulation inhibitor 1 from Tachypleus tridentatus (Japanese horseshoe crab).